Here is a 240-residue protein sequence, read N- to C-terminus: (DL)-glycerol-3-phosphatase 2 (240 aa).

The active-site Nucleophile is Asp20. Residues Asp20, Asp22, and Asp185 each coordinate Mg(2+). Asp22 functions as the Proton donor in the catalytic mechanism.

This sequence belongs to the HAD-like hydrolase superfamily. DOG/GPP family. Requires Mg(2+) as cofactor. Ubiquitous with highest expression in siliques. Mainly restricted to the meristem of immature flower and vascular elements of the root, shoot, leave, siliqua and developing embryo (at the protein level).

The protein resides in the cytoplasm. The enzyme catalyses sn-glycerol 1-phosphate + H2O = glycerol + phosphate. It catalyses the reaction sn-glycerol 3-phosphate + H2O = glycerol + phosphate. Its function is as follows. Acts as a glycerol-3-phosphatase with higher stereospecificity for L-glycerol-3-phosphate than DL-glycerol-3-phosphate. The sequence is that of (DL)-glycerol-3-phosphatase 2 (GPP2) from Arabidopsis thaliana (Mouse-ear cress).